We begin with the raw amino-acid sequence, 209 residues long: Auxin-binding protein ABP19a (209 aa).

The first 18 residues, Met-1 to Ala-18, serve as a signal peptide directing secretion. Residues Cys-24 and Cys-39 are joined by a disulfide bond. In terms of domain architecture, Cupin type-1 spans Ser-53–Lys-199. Asn-60 carries an N-linked (GlcNAc...) asparagine glycan. His-101, His-103, Glu-108, and His-147 together coordinate Mn(2+).

Belongs to the germin family. In terms of assembly, interacts with ABP20.

The protein localises to the secreted. The protein resides in the extracellular space. It is found in the apoplast. Its subcellular location is the cell wall. Probable receptor for the plant growth-promoting hormone auxin. This Prunus persica (Peach) protein is Auxin-binding protein ABP19a (ABP19A).